A 255-amino-acid chain; its full sequence is Ribosomal RNA large subunit methyltransferase E (255 aa).

S-adenosyl-L-methionine-binding residues include G50, W52, D68, D84, and D108. K148 acts as the Proton acceptor in catalysis. The TRAM domain occupies 195–253 (PVRSGEIYDVTVDSVGRTGDGIAMIQGFAVIVKNASPGERLRIKIGPVKQRFAFASILE).

This sequence belongs to the class I-like SAM-binding methyltransferase superfamily. RNA methyltransferase RlmE family.

The protein localises to the cytoplasm. The enzyme catalyses uridine(2552) in 23S rRNA + S-adenosyl-L-methionine = 2'-O-methyluridine(2552) in 23S rRNA + S-adenosyl-L-homocysteine + H(+). In terms of biological role, specifically methylates the uridine in position 2552 of 23S rRNA at the 2'-O position of the ribose in the fully assembled 50S ribosomal subunit. In Methanothrix thermoacetophila (strain DSM 6194 / JCM 14653 / NBRC 101360 / PT) (Methanosaeta thermophila), this protein is Ribosomal RNA large subunit methyltransferase E.